A 141-amino-acid polypeptide reads, in one-letter code: Large ribosomal subunit protein uL11c (141 aa).

The protein belongs to the universal ribosomal protein uL11 family. In terms of assembly, part of the ribosomal stalk of the 50S ribosomal subunit. Interacts with L10 and the large rRNA to form the base of the stalk. L10 forms an elongated spine to which L12 dimers bind in a sequential fashion forming a multimeric L10(L12)X complex.

The protein localises to the plastid. The protein resides in the chloroplast. Functionally, forms part of the ribosomal stalk which helps the ribosome interact with GTP-bound translation factors. The sequence is that of Large ribosomal subunit protein uL11c from Pyropia yezoensis (Susabi-nori).